Reading from the N-terminus, the 87-residue chain is Large ribosomal subunit protein eL33 (87 aa).

This sequence belongs to the eukaryotic ribosomal protein eL33 family.

The protein is Large ribosomal subunit protein eL33 of Pyrococcus horikoshii (strain ATCC 700860 / DSM 12428 / JCM 9974 / NBRC 100139 / OT-3).